A 123-amino-acid polypeptide reads, in one-letter code: DCPSDWSPYGGHCYKLFKQRMNWADAENLCAQQRKESHLVSFHSSEEVDFLVLLTFPILGPDLYWTGLSNIWNGCSFEWSDGTKVNYNAWASESECVASKTTDNQWWSFPCTRLQYFVCEFQA.

Intrachain disulfides connect cysteine 2/cysteine 13, cysteine 30/cysteine 119, and cysteine 96/cysteine 111. Positions 9-120 (YGGHCYKLFK…CTRLQYFVCE (112 aa)) constitute a C-type lectin domain.

The protein belongs to the snaclec family. As to quaternary structure, heterodimer of subunits alpha and beta; disulfide-linked. In terms of tissue distribution, expressed by the venom gland.

It is found in the secreted. Functionally, binds to platelet GPIb (subunit alpha) (GP1BA) and functions as a receptor blocker for vWF binding to GPIb. The platelet GPIb-binding site resides on the GPIB-BP subunit beta and not on the alpha subunit. At a final concentration of 104 nM totally abolishes vWF-dependent shear-induced platelet aggregation (SIPA) at a high shear stress, but had no effect on SIPA at a low shear stress. The protein is Snaclec GPIB-binding protein subunit beta of Bothrops jararaca (Jararaca).